Here is a 338-residue protein sequence, read N- to C-terminus: Diacylglycerol acyltransferase/mycolyltransferase Ag85A (338 aa).

Positions 1–42 (MQLVDRVRGAVTGMSRRLVVGAVGAALVSGLVGAVGGTATAG) are cleaved as a signal peptide. 85-86 (LR) is a binding site for substrate. Residues 101–111 (FEWYDQSGLSV) are fibronectin-binding. Cys-130 and Cys-135 are disulfide-bonded. Ser-169 and Asp-197 together coordinate substrate. Ser-169 (nucleophile) is an active-site residue. Glu-273 is an active-site residue. Substrate-binding positions include 275 to 278 (FVRT), Lys-282, and 305 to 307 (HSW). Residue His-305 is part of the active site.

The protein belongs to the mycobacterial A85 antigen family. In terms of assembly, homodimer.

The protein resides in the secreted. It localises to the cell wall. Its subcellular location is the cytoplasm. The catalysed reaction is an acyl-CoA + a 1,2-diacyl-sn-glycerol = a triacyl-sn-glycerol + CoA. It carries out the reaction 2 alpha,alpha'-trehalose 6-mycolate = alpha,alpha'-trehalose 6,6'-bismycolate + alpha,alpha-trehalose. In terms of biological role, the antigen 85 proteins (FbpA, FbpB, FbpC) are responsible for the high affinity of mycobacteria for fibronectin, a large adhesive glycoprotein, which facilitates the attachment of M.tuberculosis to murine alveolar macrophages (AMs). They also help to maintain the integrity of the cell wall by catalyzing the transfer of mycolic acids to cell wall arabinogalactan, and through the synthesis of alpha,alpha-trehalose dimycolate (TDM, cord factor). They catalyze the transfer of a mycoloyl residue from one molecule of alpha,alpha-trehalose monomycolate (TMM) to another TMM, leading to the formation of TDM. FbpA mediates triacylglycerol (TAG) formation with long-chain acyl-CoA as the acyl donor and 1,2-dipalmitoyl-sn-glycerol (1,2-dipalmitin) as the acyl acceptor. It has a preference for C26:0-CoA over C18:1-CoA. The sequence is that of Diacylglycerol acyltransferase/mycolyltransferase Ag85A (fbpA) from Mycobacterium bovis (strain ATCC BAA-935 / AF2122/97).